The primary structure comprises 157 residues: Endoribonuclease YbeY (157 aa).

Residues histidine 111, histidine 115, and histidine 121 each coordinate Zn(2+).

Belongs to the endoribonuclease YbeY family. It depends on Zn(2+) as a cofactor.

It is found in the cytoplasm. In terms of biological role, single strand-specific metallo-endoribonuclease involved in late-stage 70S ribosome quality control and in maturation of the 3' terminus of the 16S rRNA. This chain is Endoribonuclease YbeY, found in Pseudomonas putida (strain ATCC 47054 / DSM 6125 / CFBP 8728 / NCIMB 11950 / KT2440).